Here is a 73-residue protein sequence, read N- to C-terminus: Antimicrobial peptide 143 (73 aa).

Positions 1 to 22 are cleaved as a signal peptide; it reads MKVKCLLAVFLIVLIAAEHCQA. Lysine amide is present on Lys38. Residues 44–73 constitute a propeptide that is removed on maturation; that stretch reads ELGTQFRPQQKNFMRREIDLERLFAEMPDY.

It belongs to the non-disulfide-bridged peptide (NDBP) superfamily. Short antimicrobial peptide (group 4) family. As to expression, expressed by the venom gland.

The protein localises to the secreted. The protein resides in the target cell membrane. Functionally, cationic host defense peptide that have antibacterial activity by breaking membranes. Is more effective on Gram-positive than on Gram-negative bacteria. The chain is Antimicrobial peptide 143 from Lychas mucronatus (Chinese swimming scorpion).